The primary structure comprises 155 residues: Sweet protein mabinlin-2 (155 aa).

A signal peptide spans 1 to 20 (MAKLIFLFATLALFVLLANA). Positions 21-35 (SIQTTVIEVDEEEDN) are excised as a propeptide. At Q36 the chain carries Pyrrolidone carboxylic acid. 4 disulfides stabilise this stretch: C40–C103, C53–C92, C93–C141, and C105–C149. The interval 64–86 (GGQPDELEDEVEDDNDDENQPRR) is disordered. A compositionally biased stretch (acidic residues) spans 68 to 81 (DELEDEVEDDNDDE). The propeptide occupies 69 to 82 (ELEDEVEDDNDDEN). Q83 is modified (pyrrolidone carboxylic acid). Residue P155 is a propeptide.

It belongs to the 2S seed storage albumins family. In terms of assembly, heterodimer of a small A and a large B chain linked by disulfide bonds.

Heat stable 2S seed storage protein having sweetness-inducing activity. The polypeptide is Sweet protein mabinlin-2 (Capparis masaikai (Mabinlang)).